Consider the following 317-residue polypeptide: Glycine--tRNA ligase alpha subunit (317 aa).

It belongs to the class-II aminoacyl-tRNA synthetase family. Tetramer of two alpha and two beta subunits.

It is found in the cytoplasm. The catalysed reaction is tRNA(Gly) + glycine + ATP = glycyl-tRNA(Gly) + AMP + diphosphate. The polypeptide is Glycine--tRNA ligase alpha subunit (Pseudomonas fluorescens (strain ATCC BAA-477 / NRRL B-23932 / Pf-5)).